Here is a 213-residue protein sequence, read N- to C-terminus: Thymidylate kinase (213 aa).

Residue 10-17 coordinates ATP; sequence GLEGAGKT.

Belongs to the thymidylate kinase family.

The enzyme catalyses dTMP + ATP = dTDP + ADP. Functionally, phosphorylation of dTMP to form dTDP in both de novo and salvage pathways of dTTP synthesis. In Klebsiella pneumoniae subsp. pneumoniae (strain ATCC 700721 / MGH 78578), this protein is Thymidylate kinase.